A 112-amino-acid chain; its full sequence is MLNEQKCEACSFDAIALTKEEQQSLLLQLSDWHLIERDDIPQLEKVYKFKNFKQAWAFSNKIAELAEEEFHHPSILLEWGKVTVTWWSHSIKGLHKNDFICASKCDALVLSE.

Belongs to the pterin-4-alpha-carbinolamine dehydratase family.

It catalyses the reaction (4aS,6R)-4a-hydroxy-L-erythro-5,6,7,8-tetrahydrobiopterin = (6R)-L-erythro-6,7-dihydrobiopterin + H2O. This is Putative pterin-4-alpha-carbinolamine dehydratase from Vibrio parahaemolyticus serotype O3:K6 (strain RIMD 2210633).